The sequence spans 42 residues: Potassium channel toxin gamma-KTx 1.2 (42 aa).

4 cysteine pairs are disulfide-bonded: cysteine 5-cysteine 23, cysteine 11-cysteine 34, cysteine 20-cysteine 39, and cysteine 24-cysteine 41.

The protein belongs to the ergtoxin family. Gamma-KTx 1 subfamily. Expressed by the venom gland.

It localises to the secreted. Its function is as follows. Blocks Kv11/ERG potassium channels. This is Potassium channel toxin gamma-KTx 1.2 from Centruroides elegans (Bark scorpion).